Here is a 373-residue protein sequence, read N- to C-terminus: Malate dehydrogenase, mitochondrial (373 aa).

NAD(+)-binding positions include 69–75 and Asp-95; that span reads GAAGGIG. The substrate site is built by Arg-141 and Arg-147. Residues Asn-154 and 177 to 179 each bind NAD(+); that span reads ISN. The substrate site is built by Asn-179 and Arg-213. Residue His-237 is the Proton acceptor of the active site. NAD(+) is bound at residue Met-288.

This sequence belongs to the LDH/MDH superfamily. MDH type 1 family. Homodimer.

It localises to the mitochondrion matrix. The enzyme catalyses (S)-malate + NAD(+) = oxaloacetate + NADH + H(+). This Chlamydomonas reinhardtii (Chlamydomonas smithii) protein is Malate dehydrogenase, mitochondrial.